The sequence spans 427 residues: Actin-related protein 3 (427 aa).

The protein belongs to the actin family. ARP3 subfamily. As to quaternary structure, component of the Arp2/3 complex composed of arp2, act2, arc1/p41-ARC, arc2/p34-ARC, arc3/p21-ARC, arc4/p20-ARC and arc5/p16-ARC.

It localises to the cytoplasm. It is found in the cytoskeleton. The protein resides in the actin patch. Its function is as follows. Functions as ATP-binding component of the Arp2/3 complex which is involved in regulation of actin polymerization and together with an activating nucleation-promoting factor (NPF) mediates the formation of branched actin networks. Seems to contact the pointed end of the daughter actin filament. May be involved in cytokinesis. This chain is Actin-related protein 3 (act2), found in Schizosaccharomyces pombe (strain 972 / ATCC 24843) (Fission yeast).